The primary structure comprises 1179 residues: MVWCLGLAVLSLVISQGADGRGKPEVVSVVGRAGESVVLGCDLLPPAGRPPLHVIEWLRFGFLLPIFIQFGLYSPRIDPDYVGRVRLQKGASLQIEGLRVEDQGWYECRVFFLDQHIPEDDFANGSWVHLTVNSPPQFQETPPAVLEVQELEPVTLRCVARGSPLPHVTWKLRGKDLGQGQGQVQVQNGTLRIRRVERGSSGVYTCQASSTEGSATHATQLLVLGPPVIVVPPKNSTVNASQDVSLACHAEAYPANLTYSWFQDNINVFHISRLQPRVRILVDGSLRLLATQPDDAGCYTCVPSNGLLHPPSASAYLTVLYPAQVTAMPPETPLPIGMPGVIRCPVRANPPLLFVSWTKDGKALQLDKFPGWSQGTEGSLIIALGNEDALGEYSCTPYNSLGTAGPSPVTRVLLKAPPAFIERPKEEYFQEVGRELLIPCSAQGDPPPVVSWTKVGRGLQGQAQVDSNSSLILRPLTKEAHGHWECSASNAVARVATSTNVYVLGTSPHVVTNVSVVALPKGANVSWEPGFDGGYLQRFSVWYTPLAKRPDRMHHDWVSLAVPVGAAHLLVPGLQPHTQYQFSVLAQNKLGSGPFSEIVLSAPEGLPTTPAAPGLPPTEIPPPLSPPRGLVAVRTPRGVLLHWDPPELVPKRLDGYVLEGRQGSQGWEVLDPAVAGTETELLVPGLIKDVLYEFRLVAFAGSFVSDPSNTANVSTSGLEVYPSRTQLPGLLPQPVLAGVVGGVCFLGVAVLVSILAGCLLNRRRAARRRRKRLRQDPPLIFSPTGKSAAPSALGSGSPDSVAKLKLQGSPVPSLRQSLLWGDPAGTPSPHPDPPSSRGPLPLEPICRGPDGRFVMGPTVAAPQERSGREQAEPRTPAQRLARSFDCSSSSPSGAPQPLCIEDISPVAPPPAAPPSPLPGPGPLLQYLSLPFFREMNVDGDWPPLEEPSPAAPPDYMDTRRCPTSSFLRSPETPPVSPRESLPGAVVGAGATAEPPYTALADWTLRERLLPGLLPAAPRGSLTSQSSGRGSASFLRPPSTAPSAGGSYLSPAPGDTSSWASGPERWPRREHVVTVSKRRNTSVDENYEWDSEFPGDMELLETLHLGLASSRLRPEAEPELGVKTPEEGCLLNTAHVTGPEARCAALREEFLAFRRRRDATRARLPAYRQPVPHPEQATLL.

The N-terminal stretch at 1-20 (MVWCLGLAVLSLVISQGADG) is a signal peptide. Residues 21–734 (RGKPEVVSVV…TQLPGLLPQP (714 aa)) are Extracellular-facing. 5 Ig-like domains span residues 24 to 124 (PEVV…DFAN), 136 to 216 (PQFQ…GSAT), 226 to 318 (PPVI…AYLT), 322 to 410 (PAQV…SPVT), and 418 to 502 (PAFI…TNVY). 5 disulfides stabilise this stretch: Cys41–Cys108, Cys158–Cys206, Cys248–Cys301, Cys344–Cys395, and Cys440–Cys486. N-linked (GlcNAc...) asparagine glycosylation is found at Asn188 and Asn256. Fibronectin type-III domains are found at residues 507 to 611 (SPHV…TTPA) and 623 to 718 (PLSP…TSGL). Asn513 and Asn524 each carry an N-linked (GlcNAc...) asparagine glycan. The disordered stretch occupies residues 606–626 (LPTTPAAPGLPPTEIPPPLSP). Residues 613–626 (PGLPPTEIPPPLSP) are compositionally biased toward pro residues. A helical membrane pass occupies residues 735–755 (VLAGVVGGVCFLGVAVLVSIL). At 756 to 1179 (AGCLLNRRRA…VPHPEQATLL (424 aa)) the chain is on the cytoplasmic side. 3 disordered regions span residues 767-919 (RRRR…PLPG), 940-988 (DWPP…VVGA), and 1015-1079 (AAPR…KRRN). The segment covering 785–800 (GKSAAPSALGSGSPDS) has biased composition (low complexity). Ser809 carries the post-translational modification Phosphoserine. Pro residues-rich tracts occupy residues 826 to 836 (TPSPHPDPPSS) and 906 to 919 (VAPPPAAPPSPLPG). Residue Thr972 is modified to Phosphothreonine. The PDZ-binding motif lies at 1177-1179 (TLL).

It belongs to the immunoglobulin superfamily. Turtle family. Interacts with MAGI2 and SHANK1.

Its subcellular location is the cell membrane. The protein resides in the synapse. In terms of biological role, functions in dendrite outgrowth and synapse maturation. The sequence is that of Protein turtle homolog A (IGSF9) from Homo sapiens (Human).